A 185-amino-acid chain; its full sequence is ATP synthase subunit delta (185 aa).

Belongs to the ATPase delta chain family. F-type ATPases have 2 components, F(1) - the catalytic core - and F(0) - the membrane proton channel. F(1) has five subunits: alpha(3), beta(3), gamma(1), delta(1), epsilon(1). CF(0) has four main subunits: a(1), b(1), b'(1) and c(10-14). The alpha and beta chains form an alternating ring which encloses part of the gamma chain. F(1) is attached to F(0) by a central stalk formed by the gamma and epsilon chains, while a peripheral stalk is formed by the delta, b and b' chains.

It localises to the cellular thylakoid membrane. Functionally, f(1)F(0) ATP synthase produces ATP from ADP in the presence of a proton or sodium gradient. F-type ATPases consist of two structural domains, F(1) containing the extramembraneous catalytic core and F(0) containing the membrane proton channel, linked together by a central stalk and a peripheral stalk. During catalysis, ATP synthesis in the catalytic domain of F(1) is coupled via a rotary mechanism of the central stalk subunits to proton translocation. This protein is part of the stalk that links CF(0) to CF(1). It either transmits conformational changes from CF(0) to CF(1) or is implicated in proton conduction. Its function is as follows. The complex from the organism is particularly stable to disruption and remains functional after 6 hrs at 55 degrees Celsius. The protein is ATP synthase subunit delta of Thermosynechococcus vestitus (strain NIES-2133 / IAM M-273 / BP-1).